Here is a 202-residue protein sequence, read N- to C-terminus: Large ribosomal subunit protein bL25 (202 aa).

The tract at residues 1–21 (MSKESYELKAEARERVGKGSS) is disordered.

It belongs to the bacterial ribosomal protein bL25 family. CTC subfamily. In terms of assembly, part of the 50S ribosomal subunit; part of the 5S rRNA/L5/L18/L25 subcomplex. Contacts the 5S rRNA. Binds to the 5S rRNA independently of L5 and L18.

This is one of the proteins that binds to the 5S RNA in the ribosome where it forms part of the central protuberance. This chain is Large ribosomal subunit protein bL25, found in Agrobacterium fabrum (strain C58 / ATCC 33970) (Agrobacterium tumefaciens (strain C58)).